The primary structure comprises 144 residues: Large ribosomal subunit protein uL16 (144 aa).

This sequence belongs to the universal ribosomal protein uL16 family. As to quaternary structure, part of the 50S ribosomal subunit.

Functionally, binds 23S rRNA and is also seen to make contacts with the A and possibly P site tRNAs. This is Large ribosomal subunit protein uL16 from Bacillus pumilus (strain SAFR-032).